The primary structure comprises 496 residues: Genome polyprotein (496 aa).

The Extracellular segment spans residues Ser1–Ser447. 6 cysteine pairs are disulfide-bonded: Cys3–Cys30, Cys60–Cys116, Cys60–Cys121, Cys74–Cys105, Cys92–Cys116, and Cys92–Cys121. Residues Asp98–Gly111 are fusion peptide. Asn154 is a glycosylation site (N-linked (GlcNAc...) asparagine; by host). Disulfide bonds link Cys186–Cys290 and Cys307–Cys338. A helical transmembrane segment spans residues Ile448–Gly468. Residues Leu469–Ser479 are Cytoplasmic-facing. A helical membrane pass occupies residues Phe480 to Ala496.

In terms of assembly, homodimer; in the endoplasmic reticulum and Golgi. In terms of processing, N-glycosylated.

The protein localises to the virion membrane. The protein resides in the host endoplasmic reticulum membrane. Its function is as follows. Binds to host cell surface receptor and mediates fusion between viral and cellular membranes. Envelope protein is synthesized in the endoplasmic reticulum in the form of heterodimer with protein prM. They play a role in virion budding in the ER, and the newly formed immature particle is covered with 60 spikes composed of heterodimer between precursor prM and envelope protein E. The virion is transported to the Golgi apparatus where the low pH causes dissociation of PrM-E heterodimers and formation of E homodimers. prM-E cleavage is ineficient, and many virions are only partially matured. These uncleaved prM would play a role in immune evasion. This Bos taurus (Bovine) protein is Genome polyprotein.